The primary structure comprises 396 residues: Probable circularly permuted 1,3-beta-glucanase YJL171C (396 aa).

An N-terminal signal peptide occupies residues 1-19 (MLQSIVLSVCMFMLHTVAA). 7 N-linked (GlcNAc...) asparagine glycosylation sites follow: Asn51, Asn99, Asn122, Asn146, Asn174, Asn219, and Asn249. Positions 259-264 (EYDIFE) match the ExDxxE motif motif. N-linked (GlcNAc...) asparagine glycosylation is found at Asn267, Asn300, Asn328, and Asn346. Asn368 is lipidated: GPI-anchor amidated asparagine. A propeptide spans 369–396 (GVALTKMQNGVWYYILAIFTAFTQVVLI) (removed in mature form).

This sequence belongs to the PGA52 family. Extensively N-glycosylated.

The protein resides in the cell membrane. The enzyme catalyses Hydrolysis of (1-&gt;3)-beta-D-glucosidic linkages in (1-&gt;3)-beta-D-glucans.. Probable circularly permuted 1,3-beta-glucanase involved in cell wall modification through beta-1,3-glucan network alterations such as increased branching or remodeling. This is Probable circularly permuted 1,3-beta-glucanase YJL171C (TOH1) from Saccharomyces cerevisiae (strain ATCC 204508 / S288c) (Baker's yeast).